A 460-amino-acid chain; its full sequence is Probable protein phosphatase 2C 38 (460 aa).

Disordered stretches follow at residues 1-30 (MVAVTGGRPPGLQDAPGAPPPAPAAEAVPS) and 83-111 (RPMRRRRRGGSSSSSSSPRDREPRDGRIA). A compositionally biased stretch (basic and acidic residues) spans 100-109 (PRDREPRDGR). The PPM-type phosphatase domain maps to 118–432 (AASLYTMRGN…DDCAVVCLFL (315 aa)). Mn(2+) contacts are provided by D154 and G155. The interval 192–219 (VTSSMTEGGGTERMDRDTETPLGTEENG) is disordered. A compositionally biased stretch (basic and acidic residues) spans 201–210 (GTERMDRDTE). Mn(2+) contacts are provided by D377 and D423.

This sequence belongs to the PP2C family. Mg(2+) serves as cofactor. It depends on Mn(2+) as a cofactor.

The enzyme catalyses O-phospho-L-seryl-[protein] + H2O = L-seryl-[protein] + phosphate. It catalyses the reaction O-phospho-L-threonyl-[protein] + H2O = L-threonyl-[protein] + phosphate. The protein is Probable protein phosphatase 2C 38 of Oryza sativa subsp. japonica (Rice).